The sequence spans 517 residues: Glutamate--tRNA ligase (517 aa).

Residues Pro-14–Gly-24 carry the 'HIGH' region motif. Residues Lys-266–Arg-270 carry the 'KMSKS' region motif. Residue Lys-269 coordinates ATP.

It belongs to the class-I aminoacyl-tRNA synthetase family. Glutamate--tRNA ligase type 1 subfamily. In terms of assembly, monomer.

The protein resides in the cytoplasm. It catalyses the reaction tRNA(Glu) + L-glutamate + ATP = L-glutamyl-tRNA(Glu) + AMP + diphosphate. Functionally, catalyzes the attachment of glutamate to tRNA(Glu) in a two-step reaction: glutamate is first activated by ATP to form Glu-AMP and then transferred to the acceptor end of tRNA(Glu). The chain is Glutamate--tRNA ligase from Cytophaga hutchinsonii (strain ATCC 33406 / DSM 1761 / CIP 103989 / NBRC 15051 / NCIMB 9469 / D465).